A 739-amino-acid chain; its full sequence is MDSRPQKVWMTPSLTESDMDYHKILTAGLSVQQGIVRQRVIPVYQVNNLEEICQLIIQAFEAGVDFQESADSFLLMLCLHHAYQGDYKLFLESGAVKYLEGHGFRFEVKKRDGVKRLEELLPAVSSGKNIKRTLAAMPEEETTEANAGQFLSFASLFLPKLVVGEKACLEKVQRQIQVHAEQGLIQYPTAWQSVGHMMVIFRLMRTNFLIKFLLIHQGMHMVAGHDANDAVISNSVAQARFSGLLIVKTVLDHILQKTERGVRLHPLARTAKVKNEVNSFKAALSSLAKHGEYAPFARLLNLSGVNNLEHGLFPQLSAIALGVATAHGSTLAGVNVGEQYQQLREAATEAEKQLQQYAESRELDHLGLDDQEKKILMNFHQKKNEISFQQTNAMVTLRKERLAKLTEAITAASLPKTSGHYDDDDDIPFPGPINDDDNPGHQDDDPTDSQDTTIPDVVVDPDDGSYGEYQSYSENGMNAPDDLVLFDLDEDDEDTKPVPNRSTKGGQQKNSQKGQHTEGRQTQSRPTQNVPGPHRTIHHASAPLTDNDRRNEPSGSTSPRMLTPINEEADPLDDADDETSSLPPLESDDEEQDRDGTSNRTPTVAPPAPVYRDHSEKRELPQDEQQDQDHTQEARNQDSDNTQPEHSFEEMYRHILRSQGPFDAVLYYHMMKDEPVVFSTSDGKEYTYPDSLEEEYPPWLTEKEAMNEENRFVTLDGQQFYWPVMNHKNKFMAILQHHQ.

The stretch at 334–363 (VNVGEQYQQLREAATEAEKQLQQYAESREL) forms a coiled coil. Residues 415 to 646 (PKTSGHYDDD…QDSDNTQPEH (232 aa)) are disordered. 2 stretches are compositionally biased toward low complexity: residues 449–458 (SQDTTIPDVV) and 504–514 (KGGQQKNSQKG). Positions 520–530 (RQTQSRPTQNV) are enriched in polar residues. The span at 567 to 579 (EEADPLDDADDET) shows a compositional bias: acidic residues. The segment covering 611–638 (YRDHSEKRELPQDEQQDQDHTQEARNQD) has biased composition (basic and acidic residues).

It belongs to the filoviruses nucleoprotein family. Homooligomer. Homomultimerizes to form the nucleocapsid. Binds to viral genomic RNA. Interacts with VP35 and VP30 to form the nucleocapsid. Interacts with host PPP2R5C; this interaction leads to VP30 dephosphorylation and viral transcription. Interacts with VP24; this interaction facilitates nucleocapsid assembly and genome packaging. Interacts with matrix protein VP40; this interaction allows recruitment of the nucleocapsid into progeny virions. Interacts with host STAU1. Interacts with host NXF1 (via RNA-binding domain); this interaction recruits NXF1 to the inclusion bodies were viral replication takes place, probably to export viral mRNA-NXF1 complexes from these sites. Interacts with host CCDC92; this interaction sequesters NP in the host cytoplasm. Interacts with host TRIM14. Phosphorylated and O-glycosylated by host. Acetylated by host EP300 in vitro.

The protein localises to the virion. Its subcellular location is the host cytoplasm. Functionally, oligomerizes into helical capsid to encapsidate the viral genome, protecting it from nucleases and the cellular innate immune response. VP35 binds to and stabilizes monomeric NP, keeping it soluble. Upon virus replication, NP is recruited to bind cooperatively viral genomic RNA and VP35 is released. The encapsidated genomic RNA is termed the nucleocapsid and serves as template for transcription and replication. The nucleocapsid is helical with a pitch of 10.81 NP per turn and a diameter of about 22nm. Each NP binds to six nucleotides of viral genomic RNA, three being exposed to the solvant and three hidden into the nucleocapsid. Also recruits host PPP2R5C phosphatase to dephosphorylate VP30 and thereby promote viral transcription. Upon virion assembly and budding, NP binds to VP24 and possibly host STAU1. In Epomops franqueti (Franquet's epauletted fruit bat), this protein is Nucleoprotein (NP).